The following is a 131-amino-acid chain: Small ribosomal subunit protein uS8 (131 aa).

This sequence belongs to the universal ribosomal protein uS8 family. In terms of assembly, part of the 30S ribosomal subunit. Contacts proteins S5 and S12.

Its function is as follows. One of the primary rRNA binding proteins, it binds directly to 16S rRNA central domain where it helps coordinate assembly of the platform of the 30S subunit. This is Small ribosomal subunit protein uS8 from Campylobacter jejuni subsp. doylei (strain ATCC BAA-1458 / RM4099 / 269.97).